We begin with the raw amino-acid sequence, 476 residues long: ATP synthase subunit beta (476 aa).

162 to 169 (GGAGVGKT) lines the ATP pocket.

The protein belongs to the ATPase alpha/beta chains family. F-type ATPases have 2 components, CF(1) - the catalytic core - and CF(0) - the membrane proton channel. CF(1) has five subunits: alpha(3), beta(3), gamma(1), delta(1), epsilon(1). CF(0) has three main subunits: a(1), b(2) and c(9-12). The alpha and beta chains form an alternating ring which encloses part of the gamma chain. CF(1) is attached to CF(0) by a central stalk formed by the gamma and epsilon chains, while a peripheral stalk is formed by the delta and b chains.

The protein localises to the cell membrane. The enzyme catalyses ATP + H2O + 4 H(+)(in) = ADP + phosphate + 5 H(+)(out). Its function is as follows. Produces ATP from ADP in the presence of a proton gradient across the membrane. The catalytic sites are hosted primarily by the beta subunits. In Mycoplasma capricolum subsp. capricolum (strain California kid / ATCC 27343 / NCTC 10154), this protein is ATP synthase subunit beta.